Reading from the N-terminus, the 108-residue chain is Large ribosomal subunit protein eL32 (108 aa).

Positions 21-30 (RRPRGRTSKM) are enriched in basic residues. Residues 21 to 44 (RRPRGRTSKMRRYEKGKPAMPAIG) are disordered.

This sequence belongs to the eukaryotic ribosomal protein eL32 family.

This Methanothermobacter thermautotrophicus (strain ATCC 29096 / DSM 1053 / JCM 10044 / NBRC 100330 / Delta H) (Methanobacterium thermoautotrophicum) protein is Large ribosomal subunit protein eL32 (rpl32e).